A 389-amino-acid polypeptide reads, in one-letter code: Mannitol-1-phosphate 5-dehydrogenase (389 aa).

5 to 16 is an NAD(+) binding site; sequence AIQFGGGNIGRG. Lys214 is an active-site residue.

Belongs to the mannitol dehydrogenase family. In terms of assembly, monomer.

The enzyme catalyses D-mannitol 1-phosphate + NAD(+) = beta-D-fructose 6-phosphate + NADH + H(+). Its function is as follows. Catalyzes the NAD(H)-dependent interconversion of D-fructose 6-phosphate and D-mannitol 1-phosphate in the mannitol metabolic pathway. The sequence is that of Mannitol-1-phosphate 5-dehydrogenase from Talaromyces marneffei (strain ATCC 18224 / CBS 334.59 / QM 7333) (Penicillium marneffei).